Here is a 779-residue protein sequence, read N- to C-terminus: Potassium/sodium hyperpolarization-activated cyclic nucleotide-gated channel 3 (779 aa).

The interval 1 to 47 (MEEEARPAAGAGEAATPARETPPAAPAQARAASGGVPESAPEPKRRQ) is disordered. At 1–96 (MEEEARPAAG…PYSDFRFYWD (96 aa)) the chain is on the cytoplasmic side. The span at 7–32 (PAAGAGEAATPARETPPAAPAQARAA) shows a compositional bias: low complexity. The tract at residues 45–90 (RRQLGTLLQPTVNKFSLRVFGSHKAVEIEQERVKSAGAWIIHPYSD) is involved in subunit assembly. A helical transmembrane segment spans residues 97 to 117 (LIMLLLMVGNLIVLPVGITFF). Residues 118 to 123 (KEENSP) lie on the Extracellular side of the membrane. A helical transmembrane segment spans residues 124-144 (PWIVFNVLSDTFFLLDLVLNF). At 145–170 (RTGIVVEEGAEILLAPRAIRTRYLRT) the chain is on the cytoplasmic side. Residues 171-191 (WFLVDLISSIPVDYIFLVVEL) form a helical membrane-spanning segment. Topologically, residues 192–200 (EPRLDAEVY) are extracellular. A helical; Voltage-sensor membrane pass occupies residues 201-221 (KTARALRIVRFTKILSLLRLL). Topologically, residues 222-252 (RLSRLIRYIHQWEEIFHMTYDLASAVVRIFN) are cytoplasmic. The helical transmembrane segment at 253-273 (LIGMMLLLCHWDGCLQFLVPM) threads the bilayer. Residues 274-296 (LQDFPSDCWVSMNRMVNHSWGRQ) are Extracellular-facing. The N-linked (GlcNAc...) asparagine glycan is linked to Asn-290. Residues 297-318 (YSHALFKAMSHMLCIGYGQQAP) constitute an intramembrane region (pore-forming). Over 319-328 (VGMPDVWLTM) the chain is Extracellular. Residues 329-349 (LSMIVGATCYAMFIGHATALI) form a helical membrane-spanning segment. Over 350-779 (QSLDSSRRQY…PRGPQISANM (430 aa)) the chain is Cytoplasmic. The segment at 353-779 (DSSRRQYQEK…PRGPQISANM (427 aa)) is interaction with KCTD3. Positions 491, 492, 494, 501, 502, 542, and 545 each coordinate 3',5'-cyclic AMP. Residues 549–569 (KNSILQRKRSEPSPGSSGGVM) are disordered. A Phosphoserine modification is found at Ser-633. The segment covering 687 to 697 (SLSRTGRSQVS) has biased composition (polar residues). Residues 687–779 (SLSRTGRSQV…PRGPQISANM (93 aa)) form a disordered region.

This sequence belongs to the potassium channel HCN family. As to quaternary structure, homotetramer. The potassium channel is composed of a homo- or heterotetrameric complex of pore-forming subunits. Interacts with HCN1. Interacts with KCTD3; this interaction increases cell surface expression and current density of this channel. Interacts with PEX5L. Detected in hypothalamus, amygdala, olfactory bulb, hippocampus and retina (at protein level). Highly expressed in brain and heart, in particular in ventricle, atrium and in sinoatrial node (SAN). Detected at low levels in skeletal muscle and lung. Expressed in DRG neurons.

Its subcellular location is the cell membrane. It carries out the reaction K(+)(in) = K(+)(out). The enzyme catalyses Na(+)(in) = Na(+)(out). With respect to regulation, unlike HCN2 and HCN4, HCN3 is insensitive to cyclic nucleotides, such as cAMP or cGMP. This lack of sensitivity of HCN3, despite harboring a functional cyclic nucleotide-binding domain (CNBD), may be explained by its shorter C-terminal sequence, which may alter the normal autoinhibition of the channel. Inhibited by Cs(1+) and ivabradine. Phosphatidylinositol-4,5-bisphosphate (PIP(2)) shifts HCN3 activation to more depolarized potentials and accelerated activation kinetics. Hyperpolarization-activated ion channel that are permeable to sodium and potassium ions, with an about 3:1 preference for potassium ions. Contributes to the native pacemaker currents in heart (If) and in neurons (Ih). In particular, plays a pivotal role in maintaining excitability and promoting rhythmic burst firing within hypothalamic nuclei. Exerts a significant influence on the configuration of the cardiac action potential waveform. Does not appear to play a prominent role in the processing of acute, neuropathic, or inflammatory pain. This Mus musculus (Mouse) protein is Potassium/sodium hyperpolarization-activated cyclic nucleotide-gated channel 3 (Hcn3).